The chain runs to 475 residues: Sulfate adenylyltransferase subunit 1 (475 aa).

Residues 25–239 (KSLLRFLTCG…EVLETVEIQR (215 aa)) enclose the tr-type G domain. The tract at residues 34–41 (GSVDDGKS) is G1. Position 34–41 (34–41 (GSVDDGKS)) interacts with GTP. The tract at residues 92 to 96 (GITID) is G2. Positions 113 to 116 (DTPG) are G3. GTP contacts are provided by residues 113 to 117 (DTPGH) and 168 to 171 (NKMD). The tract at residues 168–171 (NKMD) is G4. Residues 206–208 (SAL) are G5.

The protein belongs to the TRAFAC class translation factor GTPase superfamily. Classic translation factor GTPase family. CysN/NodQ subfamily. In terms of assembly, heterodimer composed of CysD, the smaller subunit, and CysN.

The catalysed reaction is sulfate + ATP + H(+) = adenosine 5'-phosphosulfate + diphosphate. The protein operates within sulfur metabolism; hydrogen sulfide biosynthesis; sulfite from sulfate: step 1/3. Functionally, with CysD forms the ATP sulfurylase (ATPS) that catalyzes the adenylation of sulfate producing adenosine 5'-phosphosulfate (APS) and diphosphate, the first enzymatic step in sulfur assimilation pathway. APS synthesis involves the formation of a high-energy phosphoric-sulfuric acid anhydride bond driven by GTP hydrolysis by CysN coupled to ATP hydrolysis by CysD. The sequence is that of Sulfate adenylyltransferase subunit 1 from Shigella sonnei (strain Ss046).